We begin with the raw amino-acid sequence, 294 residues long: Probable 2-(5''-triphosphoribosyl)-3'-dephosphocoenzyme-A synthase (294 aa).

Belongs to the CitG/MdcB family.

The enzyme catalyses 3'-dephospho-CoA + ATP = 2'-(5''-triphospho-alpha-D-ribosyl)-3'-dephospho-CoA + adenine. This chain is Probable 2-(5''-triphosphoribosyl)-3'-dephosphocoenzyme-A synthase, found in Streptococcus equi subsp. zooepidemicus (strain MGCS10565).